A 393-amino-acid polypeptide reads, in one-letter code: Lipid-A-disaccharide synthase (393 aa).

It belongs to the LpxB family.

It catalyses the reaction a lipid X + a UDP-2-N,3-O-bis[(3R)-3-hydroxyacyl]-alpha-D-glucosamine = a lipid A disaccharide + UDP + H(+). It functions in the pathway bacterial outer membrane biogenesis; LPS lipid A biosynthesis. Its function is as follows. Condensation of UDP-2,3-diacylglucosamine and 2,3-diacylglucosamine-1-phosphate to form lipid A disaccharide, a precursor of lipid A, a phosphorylated glycolipid that anchors the lipopolysaccharide to the outer membrane of the cell. The protein is Lipid-A-disaccharide synthase of Bordetella pertussis (strain Tohama I / ATCC BAA-589 / NCTC 13251).